The sequence spans 434 residues: Transcription factor AP-2-epsilon (434 aa).

Positions 30 to 123 (LNQGPYSSAP…GLSLDPRRDY (94 aa)) are disordered. Positions 52 to 62 (PYFPPPYPQPP) are enriched in pro residues. The PPxY motif signature appears at 53 to 58 (YFPPPY). A compositionally biased stretch (polar residues) spans 81–97 (SSINSIHHQHQQPSWHT). The interval 278–408 (RRKAANVTLL…YLLESLKGMD (131 aa)) is H-S-H (helix-span-helix), dimerization. Residues 415–434 (TGNGHSAAESKSEKDIKHRK) form a disordered region. The span at 422-434 (AESKSEKDIKHRK) shows a compositional bias: basic and acidic residues.

It belongs to the AP-2 family. In terms of assembly, binds DNA as a dimer. Can form homodimers or heterodimers with other AP-2 family members.

Its subcellular location is the nucleus. Sequence-specific DNA-binding protein that interacts with inducible viral and cellular enhancer elements to regulate transcription of selected genes. AP-2 factors bind to the consensus sequence 5'-GCCNNNGGC-3' and activate genes involved in a large spectrum of important biological functions. The polypeptide is Transcription factor AP-2-epsilon (Xenopus laevis (African clawed frog)).